A 144-amino-acid polypeptide reads, in one-letter code: Large ribosomal subunit protein uL15 (144 aa).

Residues 24–52 form a disordered region; that stretch reads GSGLGKTAGRGHKGLKSRSGGSVRPGFEG.

The protein belongs to the universal ribosomal protein uL15 family. In terms of assembly, part of the 50S ribosomal subunit.

Functionally, binds to the 23S rRNA. The protein is Large ribosomal subunit protein uL15 of Cellvibrio japonicus (strain Ueda107) (Pseudomonas fluorescens subsp. cellulosa).